The following is a 238-amino-acid chain: Probable transcriptional regulatory protein ABC1956 (238 aa).

The protein belongs to the TACO1 family. YeeN subfamily.

The protein resides in the cytoplasm. The chain is Probable transcriptional regulatory protein ABC1956 from Shouchella clausii (strain KSM-K16) (Alkalihalobacillus clausii).